A 109-amino-acid chain; its full sequence is MEVKAIHKSARISAQKTRLVADQIRGLPIARALNILNFSPKKAAFIVKKVVESAMANAEHNKGADIDELKVSTIIVDKGTSLKRFTARAKGRGNQIEKQTCHITVTLSN.

This sequence belongs to the universal ribosomal protein uL22 family. Part of the 50S ribosomal subunit.

This protein binds specifically to 23S rRNA; its binding is stimulated by other ribosomal proteins, e.g. L4, L17, and L20. It is important during the early stages of 50S assembly. It makes multiple contacts with different domains of the 23S rRNA in the assembled 50S subunit and ribosome. Its function is as follows. The globular domain of the protein is located near the polypeptide exit tunnel on the outside of the subunit, while an extended beta-hairpin is found that lines the wall of the exit tunnel in the center of the 70S ribosome. This is Large ribosomal subunit protein uL22 from Polynucleobacter asymbioticus (strain DSM 18221 / CIP 109841 / QLW-P1DMWA-1) (Polynucleobacter necessarius subsp. asymbioticus).